A 176-amino-acid chain; its full sequence is dCTP deaminase (176 aa).

Residues 102 to 107 and Asp-118 each bind dCTP; that span reads RSTFAR. The active-site Proton donor/acceptor is Glu-128. Residues Tyr-160 and Gln-167 each coordinate dCTP.

The protein belongs to the dCTP deaminase family. Homotrimer.

It carries out the reaction dCTP + H2O + H(+) = dUTP + NH4(+). The protein operates within pyrimidine metabolism; dUMP biosynthesis; dUMP from dCTP (dUTP route): step 1/2. Functionally, catalyzes the deamination of dCTP to dUTP. This is dCTP deaminase from Hyperthermus butylicus (strain DSM 5456 / JCM 9403 / PLM1-5).